The primary structure comprises 235 residues: Orotidine 5'-phosphate decarboxylase (235 aa).

Residues D10, K33, 60–69, T123, R185, Q194, G214, and R215 contribute to the substrate site; that span reads DLKMSDIPNT. K62 functions as the Proton donor in the catalytic mechanism.

The protein belongs to the OMP decarboxylase family. Type 1 subfamily. As to quaternary structure, homodimer.

The enzyme catalyses orotidine 5'-phosphate + H(+) = UMP + CO2. It functions in the pathway pyrimidine metabolism; UMP biosynthesis via de novo pathway; UMP from orotate: step 2/2. Its function is as follows. Catalyzes the decarboxylation of orotidine 5'-monophosphate (OMP) to uridine 5'-monophosphate (UMP). The protein is Orotidine 5'-phosphate decarboxylase of Lactobacillus gasseri (strain ATCC 33323 / DSM 20243 / BCRC 14619 / CIP 102991 / JCM 1131 / KCTC 3163 / NCIMB 11718 / NCTC 13722 / AM63).